We begin with the raw amino-acid sequence, 360 residues long: Phospho-N-acetylmuramoyl-pentapeptide-transferase (360 aa).

10 helical membrane-spanning segments follow: residues Leu-19 to Phe-39, Thr-73 to Leu-93, Ser-95 to Asp-115, Tyr-136 to Ile-156, Gly-173 to Leu-193, Gly-199 to Ser-219, Ile-233 to Phe-253, Val-263 to Val-283, Leu-288 to Val-308, and Val-338 to Lys-358.

The protein belongs to the glycosyltransferase 4 family. MraY subfamily. Mg(2+) is required as a cofactor.

It localises to the cell inner membrane. The catalysed reaction is UDP-N-acetyl-alpha-D-muramoyl-L-alanyl-gamma-D-glutamyl-meso-2,6-diaminopimeloyl-D-alanyl-D-alanine + di-trans,octa-cis-undecaprenyl phosphate = di-trans,octa-cis-undecaprenyl diphospho-N-acetyl-alpha-D-muramoyl-L-alanyl-D-glutamyl-meso-2,6-diaminopimeloyl-D-alanyl-D-alanine + UMP. It functions in the pathway cell wall biogenesis; peptidoglycan biosynthesis. In terms of biological role, catalyzes the initial step of the lipid cycle reactions in the biosynthesis of the cell wall peptidoglycan: transfers peptidoglycan precursor phospho-MurNAc-pentapeptide from UDP-MurNAc-pentapeptide onto the lipid carrier undecaprenyl phosphate, yielding undecaprenyl-pyrophosphoryl-MurNAc-pentapeptide, known as lipid I. The chain is Phospho-N-acetylmuramoyl-pentapeptide-transferase from Dichelobacter nodosus (strain VCS1703A).